Consider the following 92-residue polypeptide: Large ribosomal subunit protein bL25 (92 aa).

This sequence belongs to the bacterial ribosomal protein bL25 family. In terms of assembly, part of the 50S ribosomal subunit; part of the 5S rRNA/L5/L18/L25 subcomplex. Contacts the 5S rRNA. Binds to the 5S rRNA independently of L5 and L18.

In terms of biological role, this is one of the proteins that binds to the 5S RNA in the ribosome where it forms part of the central protuberance. The sequence is that of Large ribosomal subunit protein bL25 from Vibrio vulnificus (strain CMCP6).